A 3068-amino-acid chain; its full sequence is Highly reducing polyketide synthase 17 (3068 aa).

The 427-residue stretch at 100 to 526 (IEPIAIVGAS…GTNAHAIMER (427 aa)) folds into the Ketosynthase family 3 (KS3) domain. Active-site for beta-ketoacyl synthase activity residues include C274, H410, and H449. The tract at residues 627-938 (YVFTGQGAQW…LAGPIRQCLA (312 aa)) is malonyl-CoA:ACP transacylase (MAT) domain. The For malonyltransferase activity role is filled by S721. Positions 1027–1160 (HHLLGVRMTE…GVVEGVMTLD (134 aa)) are N-terminal hotdog fold. Residues 1027–1311 (HHLLGVRMTE…RASNIDMTIV (285 aa)) form a dehydratase (DH) domain region. Residues 1027 to 1334 (HHLLGVRMTE…SRSLAAHVDG (308 aa)) enclose the PKS/mFAS DH domain. H1059 acts as the Proton acceptor; for dehydratase activity in catalysis. A C-terminal hotdog fold region spans residues 1179-1334 (NRTMVIPEEL…SRSLAAHVDG (156 aa)). Catalysis depends on D1247, which acts as the Proton donor; for dehydratase activity. The interval 1735–2037 (LGPVQSSKGD…LVRQGGKVIL (303 aa)) is enoylreductase (ER) domain. The catalytic ketoreductase (KR) domain stretch occupies residues 2062-2240 (AAYVVAGGMG…FLSMNIGWIE (179 aa)). The Carrier domain occupies 2345–2423 (TIIDFISSAI…DLAEKVASRS (79 aa)). An O-(pantetheine 4'-phosphoryl)serine modification is found at S2383. A choline/carnitine acyltransferase (cAT) domain region spans residues 2831 to 3062 (FDVASLGLRS…SCMITSLLED (232 aa)).

It functions in the pathway secondary metabolite biosynthesis. Functionally, highly reducing polyketide synthase; part of the gene cluster that mediates the biosynthesis of (2Z,4E,6E,10E)-9-hydroxydodeca-2,4,6,10-tetraenoic acid (BAA), (2E,4E,6E,10E)-9-hydroxydodeca-2,4,6,10-tetraenoic acid (BAB), and (2Z,4E,6E)-octa-2,4,6-trienedioic acid (PBA). The highly reducing polyketide synthase Ba17a is sufficent to produce PBA and BAA. The still to be characterized protein Ba17b leads to an increased production of BAA as well as to the production of the new compound BAB. BAA does not possess insecticidal activity against G.mellonella larvae, however, both BAA and BAB increase the growth of Candida albicans and BAA can mitigate the fungicidal effects of fluconazole over C.albicans, suggesting that generalist pathogens such as M.anisopliae, can potentially manipulate the yeast microbiota found in arthropods (and anywhere else) by the activity of compounds as BAA and BAB. The polypeptide is Highly reducing polyketide synthase 17 (Metarhizium anisopliae (Entomophthora anisopliae)).